A 119-amino-acid chain; its full sequence is Beta-2-microglobulin (119 aa).

The first 20 residues, 1-20 (MARFVVAALLVLLCLSGLEA), serve as a signal peptide directing secretion. Residues 25 to 114 (PKIQVYSRHP…VTFPTPKTVK (90 aa)) enclose the Ig-like C1-type domain. A disulfide bond links Cys-45 and Cys-100.

This sequence belongs to the beta-2-microglobulin family. As to quaternary structure, heterodimer of an alpha chain and a beta chain. Beta-2-microglobulin is the beta-chain of major histocompatibility complex class I molecules.

It localises to the secreted. Its function is as follows. Component of the class I major histocompatibility complex (MHC). Involved in the presentation of peptide antigens to the immune system. The polypeptide is Beta-2-microglobulin (B2M) (Cebus albifrons (White-fronted capuchin)).